Consider the following 467-residue polypeptide: Asparagine--tRNA ligase (467 aa).

This sequence belongs to the class-II aminoacyl-tRNA synthetase family. In terms of assembly, homodimer.

The protein resides in the cytoplasm. The enzyme catalyses tRNA(Asn) + L-asparagine + ATP = L-asparaginyl-tRNA(Asn) + AMP + diphosphate + H(+). The polypeptide is Asparagine--tRNA ligase (Histophilus somni (strain 129Pt) (Haemophilus somnus)).